A 53-amino-acid chain; its full sequence is Abaecin (53 aa).

The first 19 residues, 1–19, serve as a signal peptide directing secretion; the sequence is MKVVIFIFALLATICAAFA.

The protein localises to the secreted. Functionally, this peptide has bactericidal activity. The polypeptide is Abaecin (Apis mellifera (Honeybee)).